The primary structure comprises 145 residues: UPF0310 protein Mvan_0064 (145 aa).

Belongs to the UPF0310 family.

The polypeptide is UPF0310 protein Mvan_0064 (Mycolicibacterium vanbaalenii (strain DSM 7251 / JCM 13017 / BCRC 16820 / KCTC 9966 / NRRL B-24157 / PYR-1) (Mycobacterium vanbaalenii)).